We begin with the raw amino-acid sequence, 418 residues long: Sterigmatocystin 8-O-methyltransferase (418 aa).

Residues Met1–Glu41 constitute a propeptide that is removed on maturation. Met170 to Phe176 provides a ligand contact to substrate. Positions Leu206–Met225 are substrate binding. Residues Gly254–Gly255, Asp277, Asp297–Ile298, and Arg313 each bind S-adenosyl-L-methionine. Residue His317 is the Proton acceptor of the active site.

It belongs to the class I-like SAM-binding methyltransferase superfamily. Cation-independent O-methyltransferase family. COMT subfamily.

Its subcellular location is the cytoplasm. The protein localises to the vacuole. It carries out the reaction sterigmatocystin + S-adenosyl-L-methionine = 8-O-methylsterigmatocystin + S-adenosyl-L-homocysteine + H(+). The catalysed reaction is dihydrosterigmatocystin + S-adenosyl-L-methionine = 8-O-methyldihydrosterigmatocystin + S-adenosyl-L-homocysteine + H(+). It functions in the pathway mycotoxin biosynthesis; aflatoxin biosynthesis. Functionally, sterigmatocystin 8-O-methyltransferase; part of the gene cluster that mediates the biosynthesis of aflatoxins, a group of polyketide-derived furanocoumarins, and part of the most toxic and carcinogenic compounds among the known mycotoxins. The four major aflatoxins produced by A.parasiticus are aflatoxin B1 (AFB1), aflatoxin B2 (AFB2), aflatoxin G1 (AFG1) and aflatoxin G2 (AFG2). Within the aflatoxin pathway, the O-methyltransferase aflP uses both sterigmatocystin (ST) and dihydrosterigmatocystin (DHST) as substrates to yield O-methylsterigmatocystin (OMST) and dihydro-O-methylsterigmatocystin (DHOMST), respectively. The biosynthesis of aflatoxins begins with the norsolorinic acid synthase aflC that combines a hexanoyl starter unit produced by the fatty acid synthase aflA/aflB and 7 malonyl-CoA extender units to synthesize the precursor NOR. The second step is the conversion of NOR to averantin and requires the norsolorinic acid ketoreductase aflD, which catalyzes the dehydration of norsolorinic acid to form (1'S)-averantin. The norsolorinic acid reductases aflE and aflF may also play a role in the conversion of NOR to AVN. The cytochrome P450 monooxygenase aflG then catalyzes the hydroxylation of AVN to 5'hydroxyaverantin (HAVN). The next step is performed by the 5'-hydroxyaverantin dehydrogenase aflH that transforms HAVN to 5'-oxoaverantin (OAVN) which is further converted to averufin (AVF) by aflK that plays a dual role in the pathway, as a 5'-oxoaverantin cyclase that mediates conversion of 5'-oxoaverantin, as well as a versicolorin B synthase in a later step in the pathway. The averufin oxidase aflI catalyzes the conversion of AVF to versiconal hemiacetal acetate (VHA). VHA is then the substrate for the versiconal hemiacetal acetate esterase aflJ to yield versiconal (VAL). Versicolorin B synthase aflK then converts VAL to versicolorin B (VERB) by closing the bisfuran ring of aflatoxin which is required for DNA-binding, thus giving to aflatoxin its activity as a mutagen. Then, the activity of the versicolorin B desaturase aflL leads to versicolorin A (VERA). A branch point starts from VERB since it can also be converted to dihydrodemethylsterigmatocystin (DMDHST), probably also by aflL, VERA being a precursor for aflatoxins B1 and G1, and DMDHST for aflatoxins B2 and G2. Next, the versicolorin reductase aflM and the cytochrome P450 monooxygenase aflN are involved in conversion of VERA to demethylsterigmatocystin (DMST). AflX and aflY seem also involved in this step, through probable aflX-mediated epoxide ring-opening step following versicolorin A oxidation and aflY-mediated Baeyer-Villiger oxidation required for the formation of the xanthone ring. The methyltransferase aflO then leads to the modification of DMST to sterigmatocystin (ST), and of DMDHST to dihydrosterigmatocystin (DHST). Both ST and DHST are then substrates of the O-methyltransferase aflP to yield O-methylsterigmatocystin (OMST) and dihydro-O-methylsterigmatocystin (DHOMST), respectively. Finally OMST is converted to aflatoxins B1 and G1, and DHOMST to aflatoxins B2 and G2, via the action of several enzymes including O-methylsterigmatocystin oxidoreductase aflQ, the cytochrome P450 monooxygenase aflU, but also the NADH-dependent flavin oxidoreductase nadA which is specifically required for the synthesis of AFG1. The polypeptide is Sterigmatocystin 8-O-methyltransferase (Aspergillus parasiticus (strain ATCC 56775 / NRRL 5862 / SRRC 143 / SU-1)).